Consider the following 200-residue polypeptide: Large ribosomal subunit protein uL4 (200 aa).

The tract at residues 42–65 is disordered; it reads TRAHKSRADVSGGGKKPFRQKGTG.

It belongs to the universal ribosomal protein uL4 family. As to quaternary structure, part of the 50S ribosomal subunit.

One of the primary rRNA binding proteins, this protein initially binds near the 5'-end of the 23S rRNA. It is important during the early stages of 50S assembly. It makes multiple contacts with different domains of the 23S rRNA in the assembled 50S subunit and ribosome. In terms of biological role, forms part of the polypeptide exit tunnel. The sequence is that of Large ribosomal subunit protein uL4 from Acinetobacter baumannii (strain AB307-0294).